The chain runs to 59 residues: uncharacterized protein (59 aa).

The next 2 helical transmembrane spans lie at 1–21 and 30–50; these read MNMY…YIFI and GSWI…PYFY.

The protein resides in the cell membrane. This is an uncharacterized protein from Bacillus subtilis (strain 168).